A 680-amino-acid chain; its full sequence is DNA-directed RNA polymerase subunit beta' (680 aa).

Positions 69, 71, 87, and 90 each coordinate Zn(2+). The Mg(2+) site is built by Asp489, Asp491, and Asp493.

Belongs to the RNA polymerase beta' chain family. RpoC1 subfamily. In plastids the minimal PEP RNA polymerase catalytic core is composed of four subunits: alpha, beta, beta', and beta''. When a (nuclear-encoded) sigma factor is associated with the core the holoenzyme is formed, which can initiate transcription. Mg(2+) serves as cofactor. Zn(2+) is required as a cofactor.

It localises to the plastid. The protein localises to the chloroplast. The enzyme catalyses RNA(n) + a ribonucleoside 5'-triphosphate = RNA(n+1) + diphosphate. Its function is as follows. DNA-dependent RNA polymerase catalyzes the transcription of DNA into RNA using the four ribonucleoside triphosphates as substrates. This is DNA-directed RNA polymerase subunit beta' from Barbarea verna (Land cress).